Reading from the N-terminus, the 357-residue chain is IGF-like family receptor 1 (357 aa).

Residues 1 to 22 form the signal peptide; sequence MGPLRLLPTAVLLLAQAAPWEA. Residues 23-160 lie on the Extracellular side of the membrane; sequence SQHCGRLEYW…HKAPQQAWPS (138 aa). Positions 100–147 are disordered; that stretch reads IPSGSRGGTGRPCREPVPNKEPCPLTPGKSSILSSQEPSSPGIPSVSW. Low complexity predominate over residues 129–139; that stretch reads SSILSSQEPSS. Residues 161-181 traverse the membrane as a helical segment; the sequence is LSFALFLVLVLLVTSAIILLA. The Cytoplasmic segment spans residues 182–357; sequence LQRHHRRLDQ…KLGSSGACLA (176 aa).

The protein localises to the cell membrane. Its function is as follows. Probable cell membrane receptor for the IGF-like family protein IGFL. This is IGF-like family receptor 1 (IGFLR1) from Bos taurus (Bovine).